A 507-amino-acid chain; its full sequence is 2,3-bisphosphoglycerate-independent phosphoglycerate mutase (507 aa).

Mn(2+)-binding residues include D11 and S61. S61 functions as the Phosphoserine intermediate in the catalytic mechanism. Substrate contacts are provided by residues H122, 150–151 (RD), R182, R188, 257–260 (RPDR), and K332. 5 residues coordinate Mn(2+): D397, H401, D438, H439, and H456.

The protein belongs to the BPG-independent phosphoglycerate mutase family. Monomer. Requires Mn(2+) as cofactor.

It carries out the reaction (2R)-2-phosphoglycerate = (2R)-3-phosphoglycerate. It functions in the pathway carbohydrate degradation; glycolysis; pyruvate from D-glyceraldehyde 3-phosphate: step 3/5. Functionally, catalyzes the interconversion of 2-phosphoglycerate and 3-phosphoglycerate. This is 2,3-bisphosphoglycerate-independent phosphoglycerate mutase from Mycoplasma genitalium (strain ATCC 33530 / DSM 19775 / NCTC 10195 / G37) (Mycoplasmoides genitalium).